The sequence spans 147 residues: Orcokinin peptides (147 aa).

An N-terminal signal peptide occupies residues 1–27 (MPRHSVFALSILALSITATVWIPTVQA). 2 consecutive propeptides follow at residues 28 to 89 (ETNL…ERFG) and 146 to 147 (FG).

It belongs to the orcokinin family.

The protein localises to the secreted. Functionally, myotropic peptides. The protein is Orcokinin peptides of Apis mellifera (Honeybee).